The chain runs to 378 residues: Probable pectin lyase A (378 aa).

The first 19 residues, 1–19 (MKFPAFITAIISIASLSSA), serve as a signal peptide directing secretion. 2 disulfide bridges follow: C82–C101 and C91–C225. R255 is a catalytic residue. Cysteines 321 and 329 form a disulfide.

This sequence belongs to the polysaccharide lyase 1 family.

Its subcellular location is the secreted. The enzyme catalyses Eliminative cleavage of (1-&gt;4)-alpha-D-galacturonan methyl ester to give oligosaccharides with 4-deoxy-6-O-methyl-alpha-D-galact-4-enuronosyl groups at their non-reducing ends.. In terms of biological role, pectinolytic enzymes consist of four classes of enzymes: pectin lyase, polygalacturonase, pectin methylesterase and rhamnogalacturonase. Among pectinolytic enzymes, pectin lyase is the most important in depolymerization of pectin, since it cleaves internal glycosidic bonds of highly methylated pectins. The protein is Probable pectin lyase A (pelA) of Aspergillus terreus (strain NIH 2624 / FGSC A1156).